Consider the following 351-residue polypeptide: Rhodopsin (351 aa).

The Extracellular portion of the chain corresponds to 1 to 36; it reads MNGTEGPFFYIPMSNATGLVRSPYDYPQYYLVPPWG. 2 N-linked (GlcNAc...) asparagine glycosylation sites follow: Asn2 and Asn15. A helical transmembrane segment spans residues 37-61; that stretch reads YACLAAYMFLLILTGFPVNFLTLYV. Residues 62–73 lie on the Cytoplasmic side of the membrane; sequence TIEHKKLRSPLN. A helical membrane pass occupies residues 74–96; sequence YILLNLAVADLFMVIGGFTTTMW. Topologically, residues 97–110 are extracellular; it reads TSLNGYFVFGRMGC. Cys110 and Cys187 are oxidised to a cystine. Residues 111–133 traverse the membrane as a helical segment; sequence NIEGFFATLGGEIALWSLVVLSM. Residues 134 to 136 carry the 'Ionic lock' involved in activated form stabilization motif; it reads ERW. Topologically, residues 134-152 are cytoplasmic; that stretch reads ERWIVVCKPISNFRFGENH. A helical transmembrane segment spans residues 153–173; the sequence is AVMGVAFSWFMAAACAVPPLV. Over 174 to 202 the chain is Extracellular; that stretch reads GWSRYIPEGMQCSCGIDYYTRAEGFNNES. An N-linked (GlcNAc...) asparagine glycan is attached at Asn200. A helical membrane pass occupies residues 203-224; it reads FVIYMFVVHFTCPLTIITFCYG. Residues 225–252 lie on the Cytoplasmic side of the membrane; it reads RLVCTVKEAAAQQQESETTQRAEREVTR. The chain crosses the membrane as a helical span at residues 253 to 274; it reads MVIIMFVAFLACWVPYASVAWY. Topologically, residues 275–286 are extracellular; it reads IFTHQGSEFGPV. A helical transmembrane segment spans residues 287 to 308; that stretch reads FMTIPAFFAKSSAVYNPVIYIC. Lys296 bears the N6-(retinylidene)lysine mark. The Cytoplasmic segment spans residues 309 to 351; that stretch reads LNKQFRHCMITTLCCGKNPFEEEEGSTTASKTEASSVCSVSPA. 2 S-palmitoyl cysteine lipidation sites follow: Cys322 and Cys323. Positions 330–351 are disordered; sequence EEEGSTTASKTEASSVCSVSPA. The span at 334 to 351 shows a compositional bias: polar residues; that stretch reads STTASKTEASSVCSVSPA.

Belongs to the G-protein coupled receptor 1 family. Opsin subfamily. Post-translationally, phosphorylated on some or all of the serine and threonine residues present in the C-terminal region. Contains one covalently linked retinal chromophore.

Its subcellular location is the membrane. It is found in the cell projection. The protein localises to the cilium. The protein resides in the photoreceptor outer segment. Photoreceptor required for image-forming vision at low light intensity. While most salt water fish species use retinal as chromophore, most freshwater fish use 3-dehydroretinal, or a mixture of retinal and 3-dehydroretinal. Light-induced isomerization of 11-cis to all-trans retinal triggers a conformational change that activates signaling via G-proteins. Subsequent receptor phosphorylation mediates displacement of the bound G-protein alpha subunit by arrestin and terminates signaling. This Sardina pilchardus (European pilchard) protein is Rhodopsin (rho).